We begin with the raw amino-acid sequence, 165 residues long: Phosphopantetheine adenylyltransferase (165 aa).

Position 11 (Thr11) interacts with substrate. Residues 11–12 (TF) and His19 each bind ATP. Substrate contacts are provided by Lys43, Thr79, and Arg93. Residues Glu104 and 128–134 (LEPLNST) each bind ATP.

It belongs to the bacterial CoaD family. Homohexamer. Requires Mg(2+) as cofactor.

It is found in the cytoplasm. The catalysed reaction is (R)-4'-phosphopantetheine + ATP + H(+) = 3'-dephospho-CoA + diphosphate. It participates in cofactor biosynthesis; coenzyme A biosynthesis; CoA from (R)-pantothenate: step 4/5. In terms of biological role, reversibly transfers an adenylyl group from ATP to 4'-phosphopantetheine, yielding dephospho-CoA (dPCoA) and pyrophosphate. The sequence is that of Phosphopantetheine adenylyltransferase from Lactococcus lactis subsp. lactis (strain IL1403) (Streptococcus lactis).